Reading from the N-terminus, the 432-residue chain is Protein distal antenna-related (432 aa).

Positions 15 to 66 (TRGKRPLRNLTPNDKVRAIQRIHNGETKASVSRDLGVPESTLRGWCKNEQKL) constitute an HTH psq-type domain. A DNA-binding region (H-T-H motif) is located at residues 42 to 62 (KASVSRDLGVPESTLRGWCKN). Disordered stretches follow at residues 195–221 (ESAD…NSTK) and 401–432 (SCAS…DGEQ). 2 stretches are compositionally biased toward polar residues: residues 202–211 (KSPQSTTDIT) and 401–425 (SCAS…TSIA).

In terms of assembly, interacts with itself, dan, ey and dac to form a complex (or complexes) containing the RD factors.

Its subcellular location is the nucleus. Its function is as follows. Probable transcription factor with a role in the retinal determination (RD) network. Regulates ato expression and is required for normal R8 induction and differentiation. Danr appears to repress Dan expression, but Dan is required for Danr expression anterior to the morphogenetic furrow (MF). Dan and Danr lie downstream of so and require dac function for highest levels of expression. Contributes to differentiation of antenna-specific characteristics; effector gene that acts downstream of homothorax (hth), Distal-less (Dll), cut (ct) and spineless (ss) genes to control differentiation of distal antennal structures. The chain is Protein distal antenna-related from Drosophila pseudoobscura pseudoobscura (Fruit fly).